The sequence spans 51 residues: Ovomucoid (51 aa).

The region spanning 3–51 (VDCSGYPKPACTLEYFPLCGSDNQTYANKCAFCNAVVEKNVTLRHLGKC) is the Kazal-like domain. 3 cysteine pairs are disulfide-bonded: C5–C35, C13–C32, and C21–C51. N42 is a glycosylation site (N-linked (GlcNAc...) asparagine).

It localises to the secreted. This is Ovomucoid from Nothoprocta cinerascens (Brushland tinamou).